The following is a 263-amino-acid chain: 7beta-hydroxysteroid dehydrogenase (263 aa).

NADP(+) is bound by residues 17–21, 40–41, and 66–67; these read TEGVG, RR, and DF. The active-site Proton acceptor is the Tyr-156. Ser-240 is a binding site for NADP(+).

It belongs to the short-chain dehydrogenases/reductases (SDR) family.

It carries out the reaction a 7beta-hydroxysteroid + NADP(+) = a 7-oxosteroid + NADPH + H(+). The enzyme catalyses 7-oxolithocholate + NADPH + H(+) = ursodeoxycholate + NADP(+). Functionally, 7beta-hydroxysteroid dehydrogenase that catalyzes the reduction of the 7-oxo group of 7-oxo-lithocholate (7-oxo-LCA), to yield ursodeoxycholate (UDCA). As R.gnavus is a common core bacterium of the human gut microbiota, this enzyme contributes to the formation of UDCA in the human colon. UDCA is regarded as a chemopreventive beneficial secondary bile acid due to its low hydrophobicity; it protects hepatocytes and bile duct epithelial cells against necrosis and apoptosis induced by more hydrophobic secondary bile acids like deoxycholate (DCA). This enzyme is also able to catalyze the reverse reaction in vitro, i.e. the oxidation of the 7beta-hydroxy group of UDCA to 7-oxo-LCA, but much less efficiently than the reduction reaction. The sequence is that of 7beta-hydroxysteroid dehydrogenase from Mediterraneibacter gnavus (strain ATCC 29149 / DSM 114966 / JCM 6515 / VPI C7-9) (Ruminococcus gnavus).